Reading from the N-terminus, the 1017-residue chain is Integrator complex subunit 3 (1017 aa).

Residues 952–1017 form a disordered region; it reads EYEDSSKPPK…KGSAVGSDSD (66 aa). The segment covering 983–997 has biased composition (acidic residues); the sequence is NEEESVSSSASEEED.

This sequence belongs to the Integrator subunit 3 family. As to quaternary structure, component of the Integrator complex, composed of core subunits INTS1, INTS2, INTS3, INTS4, INTS5, INTS6, INTS7, INTS8, INTS9/RC74, INTS10, INTS11/CPSF3L, INTS12, INTS13, INTS14 and INTS15. The core complex associates with protein phosphatase 2A subunits PPP2CA and PPP2R1A, to form the Integrator-PP2A (INTAC) complex. Component of the SOSS complex.

It is found in the nucleus. The protein localises to the cytoplasm. Its function is as follows. Component of the integrator complex, a multiprotein complex that terminates RNA polymerase II (Pol II) transcription in the promoter-proximal region of genes. The integrator complex provides a quality checkpoint during transcription elongation by driving premature transcription termination of transcripts that are unfavorably configured for transcriptional elongation: the complex terminates transcription by (1) catalyzing dephosphorylation of the C-terminal domain (CTD) of Pol II subunit POLR2A/RPB1 and SUPT5H/SPT5, (2) degrading the exiting nascent RNA transcript via endonuclease activity and (3) promoting the release of Pol II from bound DNA. The integrator complex is also involved in terminating the synthesis of non-coding Pol II transcripts, such as enhancer RNAs (eRNAs), small nuclear RNAs (snRNAs), telomerase RNAs and long non-coding RNAs (lncRNAs). Within the integrator complex, INTS3 is involved in the post-termination step: INTS3 binds INTS7 in the open conformation of integrator complex and prevents the rebinding of Pol II to the integrator after termination cycle. Functionally, component of the SOSS complex, a multiprotein complex that functions downstream of the MRN complex to promote DNA repair and G2/M checkpoint. The SOSS complex associates with single-stranded DNA at DNA lesions and influences diverse endpoints in the cellular DNA damage response including cell-cycle checkpoint activation, recombinational repair and maintenance of genomic stability. The SOSS complex is required for efficient homologous recombination-dependent repair of double-strand breaks (DSBs) and ATM-dependent signaling pathways. In the SOSS complex, it is required for the assembly of the complex and for stabilization of the complex at DNA damage sites. This chain is Integrator complex subunit 3 (ints3), found in Danio rerio (Zebrafish).